Reading from the N-terminus, the 301-residue chain is MTLTLPAPAKLNLFLHITGRRDDGYHQLQTVFALLDHGDTLRFSPADTLSLQCHQEGGASDLPTDDSNLILQAARALQAHTGSSKGAAITLTKRLPMGGGVGGGSSDAATALLGLNAFWALGLTLQELAHIGLTLGADVPVFVFGKSAWAEGVGEKINPIILPNDAFLVVHPGIHVSTARIFGDQQLTRDTPISKLPASLETVLTREFHNDCEAVATQHFPEIGKTLDWLKQHTGNARMTGTGACCFSRLTGLQQGQQLLQQLPQHWTGFVARSCNTSPLHQILGEALAKFRETKNSGKPA.

Lys10 is an active-site residue. 96–106 (PMGGGVGGGSS) is a binding site for ATP. Asp138 is an active-site residue.

The protein belongs to the GHMP kinase family. IspE subfamily.

It catalyses the reaction 4-CDP-2-C-methyl-D-erythritol + ATP = 4-CDP-2-C-methyl-D-erythritol 2-phosphate + ADP + H(+). It functions in the pathway isoprenoid biosynthesis; isopentenyl diphosphate biosynthesis via DXP pathway; isopentenyl diphosphate from 1-deoxy-D-xylulose 5-phosphate: step 3/6. Catalyzes the phosphorylation of the position 2 hydroxy group of 4-diphosphocytidyl-2C-methyl-D-erythritol. The chain is 4-diphosphocytidyl-2-C-methyl-D-erythritol kinase from Alcanivorax borkumensis (strain ATCC 700651 / DSM 11573 / NCIMB 13689 / SK2).